Reading from the N-terminus, the 74-residue chain is Neuropeptide-like protein 33 (74 aa).

The N-terminal stretch at 1–21 (MISTSLLLVVLLFAILAIVDA) is a signal peptide. Tyr-72 carries the tyrosine amide modification.

This sequence belongs to the YARP (YGGW-amide related peptide) family. Expressed in hypoderm.

Its subcellular location is the secreted. May have antifungic activity against D.coniospora. The polypeptide is Neuropeptide-like protein 33 (nlp-33) (Caenorhabditis elegans).